The chain runs to 579 residues: CTP synthase (579 aa).

The interval 1–281 is amidoligase domain; sequence MPALRKHPQT…DAYVVRRLNL (281 aa). A CTP-binding site is contributed by Ser-23. Ser-23 is a binding site for UTP. Residues 24 to 29 and Asp-81 each bind ATP; that span reads SLGKGL. Mg(2+) is bound by residues Asp-81 and Glu-155. CTP is bound by residues 162–164, 202–207, and Lys-238; these read DIE and KTKPTQ. Residues 202 to 207 and Lys-238 each bind UTP; that span reads KTKPTQ. Positions 306 to 554 constitute a Glutamine amidotransferase type-1 domain; sequence RIALVGKYID…IGAALDYKAA (249 aa). Gly-369 provides a ligand contact to L-glutamine. The active-site Nucleophile; for glutamine hydrolysis is the Cys-396. L-glutamine contacts are provided by residues 397–400, Glu-419, and Arg-480; that span reads LGLQ. Active-site residues include His-527 and Glu-529.

Belongs to the CTP synthase family. Homotetramer.

The catalysed reaction is UTP + L-glutamine + ATP + H2O = CTP + L-glutamate + ADP + phosphate + 2 H(+). The enzyme catalyses L-glutamine + H2O = L-glutamate + NH4(+). It carries out the reaction UTP + NH4(+) + ATP = CTP + ADP + phosphate + 2 H(+). Its pathway is pyrimidine metabolism; CTP biosynthesis via de novo pathway; CTP from UDP: step 2/2. Allosterically activated by GTP, when glutamine is the substrate; GTP has no effect on the reaction when ammonia is the substrate. The allosteric effector GTP functions by stabilizing the protein conformation that binds the tetrahedral intermediate(s) formed during glutamine hydrolysis. Inhibited by the product CTP, via allosteric rather than competitive inhibition. Its function is as follows. Catalyzes the ATP-dependent amination of UTP to CTP with either L-glutamine or ammonia as the source of nitrogen. Regulates intracellular CTP levels through interactions with the four ribonucleotide triphosphates. This Mycobacterium sp. (strain JLS) protein is CTP synthase.